The chain runs to 469 residues: MPQFLSEDFLLDTEFARRLYHEYAVDQPIFDYHCHLPPEQIAENYRFKNLYDIWLKGDHYKWRAMRTNGVPERLCTGDASDWEKFEAWAATVPHTIGNPLYHWTHLELRRPFGVTGTLLSPSTAKGIWDRCNAMLERDDFTARGIMQQMNVKMVGTTDDPIDDLRHHKAVAQDSSFSIKVLPSWRPDKAFNIELATFNDYMAKLGEVSDTDIRRFSDLQTALTKRLDHFAAHGCKVSDHALDVVMFAEADDATLDKILARRLAGETLSEHEVAQFKTGVLVWLGAEYARRGWVQQYHIGALRNNNLRQFKLLGPDVGFDSINDRPLAQELSRLLSKQNEENLLPKTILYCLNPRDNEVLGTMIGNFQGEGMPGKMQFGSGWWFNDQKDGMQRQMTQLAQLGLLSRFVGMLTDSRSFLSYTRHEYFRRILCQMIGRWVEDGEAPADLPLLGEMVKNISFDNAKNYFAIEL.

This sequence belongs to the metallo-dependent hydrolases superfamily. Uronate isomerase family.

The enzyme catalyses D-glucuronate = D-fructuronate. It catalyses the reaction aldehydo-D-galacturonate = keto-D-tagaturonate. It participates in carbohydrate metabolism; pentose and glucuronate interconversion. The chain is Uronate isomerase from Pectobacterium atrosepticum (strain SCRI 1043 / ATCC BAA-672) (Erwinia carotovora subsp. atroseptica).